The sequence spans 407 residues: Aminomethyltransferase, mitochondrial (407 aa).

A mitochondrion-targeting transit peptide spans 1-29 (MRGGLWQLGQSITRRLGQSDKKTIARRCY). 3 residues coordinate substrate: glutamate 234, arginine 265, and tyrosine 403.

It belongs to the GcvT family. The glycine cleavage system is composed of four proteins: P, T, L and H.

The protein localises to the mitochondrion. It carries out the reaction N(6)-[(R)-S(8)-aminomethyldihydrolipoyl]-L-lysyl-[protein] + (6S)-5,6,7,8-tetrahydrofolate = N(6)-[(R)-dihydrolipoyl]-L-lysyl-[protein] + (6R)-5,10-methylene-5,6,7,8-tetrahydrofolate + NH4(+). Functionally, the glycine cleavage system catalyzes the degradation of glycine. This Flaveria pringlei protein is Aminomethyltransferase, mitochondrial (GDCST).